The primary structure comprises 476 residues: Beta-amyrin 28-monooxygenase (476 aa).

A helical membrane pass occupies residues 2–22 (ELLYVCLVCVFVFLVSLLLLY). Cys-421 is a heme binding site.

This sequence belongs to the cytochrome P450 family. It depends on heme as a cofactor. Specifically expressed in roots.

It localises to the membrane. It carries out the reaction beta-amyrin + 3 reduced [NADPH--hemoprotein reductase] + 3 O2 = oleanolate + 3 oxidized [NADPH--hemoprotein reductase] + 4 H2O + 4 H(+). Functionally, catalyzes the carboxylation of beta-amyrin at the C-28 position to form oleanolate. Catalyzes the carboxylation of alpha-amyrin at the C-28 position to form ursolate. The sequence is that of Beta-amyrin 28-monooxygenase (CYP716A44) from Solanum lycopersicum (Tomato).